Here is a 661-residue protein sequence, read N- to C-terminus: 72 kDa type IV collagenase (661 aa).

The N-terminal stretch at 1–30 (MTEARVSRGALAALLRALCALGCLLGRAAA) is a signal peptide. The propeptide at 31–110 (APSPIIKFPG…PRCGNPDVAN (80 aa)) is activation peptide. A Cysteine switch motif is present at residues 101–108 (PRCGNPDV). Cys-103 contributes to the Zn(2+) binding site. Positions 111–222 (YNFFPRKPKW…LRTLGEGQVV (112 aa)) are collagenase-like 1. Residues Asp-135 and Asp-169 each contribute to the Ca(2+) site. The Zn(2+) site is built by His-179 and Asp-181. Asp-186 and Gly-187 together coordinate Ca(2+). Residue His-194 participates in Zn(2+) binding. Gly-201, Gly-203, and Asp-205 together coordinate Ca(2+). His-207 is a binding site for Zn(2+). 3 residues coordinate Ca(2+): Asp-209, Asp-210, and Glu-212. The interval 223–397 (RVKYGNADGE…WGFCPDQGYS (175 aa)) is collagen-binding. Fibronectin type-II domains are found at residues 229–277 (ADGE…FCPH), 287–335 (ADGQ…FCPE), and 345–393 (SEGA…FCPD). 6 cysteine pairs are disulfide-bonded: Cys-234–Cys-260, Cys-248–Cys-275, Cys-292–Cys-318, Cys-306–Cys-333, Cys-350–Cys-376, and Cys-364–Cys-391. The segment at 398–466 (LFLVAAHEFG…GPTPTLGPVT (69 aa)) is collagenase-like 2. His-404 contacts Zn(2+). Residue Glu-405 is part of the active site. 2 residues coordinate Zn(2+): His-408 and His-414. Residues 415–661 (SQDPGALMAP…GSIKSDWLGC (247 aa)) form a required for inhibitor TIMP2 binding region. Hemopexin repeat units lie at residues 469-517 (LCKQ…WPEL), 518-564 (PEKI…GLPP), 566-614 (VQKV…WNAI), and 615-661 (PDNL…WLGC). Residues Cys-470 and Cys-661 are joined by a disulfide bond. Asp-477, Asp-522, and Asp-570 together coordinate Ca(2+). The N-linked (GlcNAc...) asparagine glycan is linked to Asn-574. Ca(2+) is bound at residue Asp-619. An N-linked (GlcNAc...) asparagine glycan is attached at Asn-643.

The protein belongs to the peptidase M10A family. In terms of assembly, interacts (via the C-terminal hemopexin-like domains-containing region) with the integrin alpha-V/beta-3; the interaction promotes vascular invasion in angiogenic vessels and melamoma cells. Interacts (via the C-terminal PEX domain) with TIMP2 (via the C-terminal); the interaction inhibits the degradation activity. Interacts with GSK3B. Ca(2+) serves as cofactor. Zn(2+) is required as a cofactor. Post-translationally, phosphorylation on multiple sites modulates enzymatic activity. Phosphorylated by PKC in vitro. In terms of processing, the propeptide is processed by MMP14 (MT-MMP1) and MMP16 (MT-MMP3). Autocatalytic cleavage in the C-terminal produces the anti-angiogenic peptide, PEX. This processing appears to be facilitated by binding integrinv/beta3.

The protein resides in the secreted. The protein localises to the extracellular space. It localises to the extracellular matrix. Its subcellular location is the membrane. It is found in the nucleus. It catalyses the reaction Cleavage of gelatin type I and collagen types IV, V, VII, X. Cleaves the collagen-like sequence Pro-Gln-Gly-|-Ile-Ala-Gly-Gln.. In terms of biological role, ubiquitinous metalloproteinase that is involved in diverse functions such as remodeling of the vasculature, angiogenesis, tissue repair, tumor invasion, inflammation, and atherosclerotic plaque rupture. As well as degrading extracellular matrix proteins, can also act on several nonmatrix proteins such as big endothelial 1 and beta-type CGRP promoting vasoconstriction. Also cleaves KISS at a Gly-|-Leu bond. Appears to have a role in myocardial cell death pathways. Contributes to myocardial oxidative stress by regulating the activity of GSK3beta. Cleaves GSK3beta in vitro. Involved in the formation of the fibrovascular tissues. Functionally, PEX, the C-terminal non-catalytic fragment of MMP2, possesses anti-angiogenic and anti-tumor properties and inhibits cell migration and cell adhesion to FGF2 and vitronectin. Ligand for integrin alpha-v/beta-3 on the surface of blood vessels. The sequence is that of 72 kDa type IV collagenase (MMP2) from Bos taurus (Bovine).